Here is a 219-residue protein sequence, read N- to C-terminus: uncharacterized protein (219 aa).

This is an uncharacterized protein from Acanthamoeba polyphaga mimivirus (APMV).